The sequence spans 229 residues: GTP:AMP phosphotransferase (229 aa).

Residue 10–15 (GVGKGT) coordinates a ribonucleoside 5'-triphosphate. The interval 30 to 59 (NVGNILRNEIKKESNIGKEVQNVVRSGNLV) is NMP. Residues Arg36, 57-59 (NLV), Gly87, 87-90 (GFPR), and Gln94 contribute to the AMP site. The segment at 123–170 (GRRICNICDKNFNVSNIQQDSFDMPPILPSKDCIQCNGHTNLIKRKDD) is LID. Arg178 contributes to the AMP binding site.

This sequence belongs to the adenylate kinase family.

It is found in the mitochondrion. The catalysed reaction is a ribonucleoside 5'-triphosphate + AMP = a ribonucleoside 5'-diphosphate + ADP. The enzyme catalyses GTP + AMP = GDP + ADP. Inhibited by the dinucleoside pentaphosphate compound P1,P5-di(guanosine-5') pentaphosphate (GP5A). Catalyzes the reversible transfer of the terminal phosphate group between GTP and AMP. Has very low activity with UTP, ITP, CTP and IMP and no activity with ATP, GMP, CMP and UMP in vitro. The sequence is that of GTP:AMP phosphotransferase from Plasmodium falciparum (isolate 3D7).